Here is a 282-residue protein sequence, read N- to C-terminus: Protoheme IX farnesyltransferase (282 aa).

The next 9 helical transmembrane spans lie at 9 to 29 (LAKP…FLLA), 39 to 59 (LPLF…GCVF), 79 to 99 (LVTG…LLIL), 102 to 122 (LVLY…GFIV), 139 to 159 (VLGG…VVNI), 165 to 185 (LALF…IAML), 210 to 230 (IMLF…VLGS), 231 to 251 (ADLF…YKSI), and 261 to 281 (VFAK…CLTM).

This sequence belongs to the UbiA prenyltransferase family. Protoheme IX farnesyltransferase subfamily.

The protein localises to the cell inner membrane. It catalyses the reaction heme b + (2E,6E)-farnesyl diphosphate + H2O = Fe(II)-heme o + diphosphate. Its pathway is porphyrin-containing compound metabolism; heme O biosynthesis; heme O from protoheme: step 1/1. Converts heme B (protoheme IX) to heme O by substitution of the vinyl group on carbon 2 of heme B porphyrin ring with a hydroxyethyl farnesyl side group. In Francisella tularensis subsp. tularensis (strain FSC 198), this protein is Protoheme IX farnesyltransferase.